Here is a 192-residue protein sequence, read N- to C-terminus: dTTP/UTP pyrophosphatase (192 aa).

Aspartate 75 functions as the Proton acceptor in the catalytic mechanism.

The protein belongs to the Maf family. YhdE subfamily. A divalent metal cation is required as a cofactor.

It localises to the cytoplasm. It carries out the reaction dTTP + H2O = dTMP + diphosphate + H(+). The enzyme catalyses UTP + H2O = UMP + diphosphate + H(+). Nucleoside triphosphate pyrophosphatase that hydrolyzes dTTP and UTP. May have a dual role in cell division arrest and in preventing the incorporation of modified nucleotides into cellular nucleic acids. This Bdellovibrio bacteriovorus (strain ATCC 15356 / DSM 50701 / NCIMB 9529 / HD100) protein is dTTP/UTP pyrophosphatase.